The following is a 321-amino-acid chain: Cytochrome c biogenesis protein CcsA (321 aa).

The next 6 membrane-spanning stretches (helical) occupy residues 17-37 (IISI…IVGI), 43-63 (KGII…WIYS), 143-163 (MLLS…FLVI), 225-245 (VISL…VWAN), 258-275 (ETWA…LHTR), and 287-307 (IVAS…NLLG).

It belongs to the CcmF/CycK/Ccl1/NrfE/CcsA family. In terms of assembly, may interact with Ccs1.

The protein resides in the plastid. The protein localises to the chloroplast thylakoid membrane. Its function is as follows. Required during biogenesis of c-type cytochromes (cytochrome c6 and cytochrome f) at the step of heme attachment. The polypeptide is Cytochrome c biogenesis protein CcsA (Drimys granadensis).